The following is a 505-amino-acid chain: Flagellin (505 aa).

This sequence belongs to the bacterial flagellin family.

It localises to the secreted. It is found in the bacterial flagellum. Flagellin is the subunit protein which polymerizes to form the filaments of bacterial flagella. This Salmonella moscow protein is Flagellin (fliC).